The following is a 226-amino-acid chain: N-(5'-phosphoribosyl)anthranilate isomerase (226 aa).

It belongs to the TrpF family.

The catalysed reaction is N-(5-phospho-beta-D-ribosyl)anthranilate = 1-(2-carboxyphenylamino)-1-deoxy-D-ribulose 5-phosphate. Its pathway is amino-acid biosynthesis; L-tryptophan biosynthesis; L-tryptophan from chorismate: step 3/5. In Saccharomyces kudriavzevii (strain ATCC MYA-4449 / AS 2.2408 / CBS 8840 / NBRC 1802 / NCYC 2889) (Yeast), this protein is N-(5'-phosphoribosyl)anthranilate isomerase (TRP1).